A 156-amino-acid chain; its full sequence is ATP synthase subunit b (156 aa).

The helical transmembrane segment at 11–31 threads the bilayer; that stretch reads LIAFALFVWFCMKFVWPPIIN.

The protein belongs to the ATPase B chain family. F-type ATPases have 2 components, F(1) - the catalytic core - and F(0) - the membrane proton channel. F(1) has five subunits: alpha(3), beta(3), gamma(1), delta(1), epsilon(1). F(0) has three main subunits: a(1), b(2) and c(10-14). The alpha and beta chains form an alternating ring which encloses part of the gamma chain. F(1) is attached to F(0) by a central stalk formed by the gamma and epsilon chains, while a peripheral stalk is formed by the delta and b chains.

It localises to the cell inner membrane. Its function is as follows. F(1)F(0) ATP synthase produces ATP from ADP in the presence of a proton or sodium gradient. F-type ATPases consist of two structural domains, F(1) containing the extramembraneous catalytic core and F(0) containing the membrane proton channel, linked together by a central stalk and a peripheral stalk. During catalysis, ATP synthesis in the catalytic domain of F(1) is coupled via a rotary mechanism of the central stalk subunits to proton translocation. In terms of biological role, component of the F(0) channel, it forms part of the peripheral stalk, linking F(1) to F(0). The sequence is that of ATP synthase subunit b from Haemophilus influenzae (strain PittGG).